The primary structure comprises 541 residues: Glutamyl-tRNA(Gln) amidotransferase subunit B, mitochondrial (541 aa).

This sequence belongs to the GatB/GatE family. GatB subfamily. As to quaternary structure, subunit of the heterotrimeric GatFAB amidotransferase (AdT) complex, composed of A, B and F subunits.

The protein localises to the mitochondrion. It carries out the reaction L-glutamyl-tRNA(Gln) + L-glutamine + ATP + H2O = L-glutaminyl-tRNA(Gln) + L-glutamate + ADP + phosphate + H(+). Allows the formation of correctly charged Gln-tRNA(Gln) through the transamidation of misacylated Glu-tRNA(Gln) in the mitochondria. The reaction takes place in the presence of glutamine and ATP through an activated gamma-phospho-Glu-tRNA(Gln). In Saccharomyces cerevisiae (strain RM11-1a) (Baker's yeast), this protein is Glutamyl-tRNA(Gln) amidotransferase subunit B, mitochondrial.